A 98-amino-acid chain; its full sequence is NADH-ubiquinone oxidoreductase chain 4L (98 aa).

3 consecutive transmembrane segments (helical) span residues 1–21, 29–49, and 59–79; these read MTAI…GVLV, TLLC…LLIT, and LPLT…ALLV.

This sequence belongs to the complex I subunit 4L family. In terms of assembly, core subunit of respiratory chain NADH dehydrogenase (Complex I) which is composed of 45 different subunits.

The protein resides in the mitochondrion inner membrane. The catalysed reaction is a ubiquinone + NADH + 5 H(+)(in) = a ubiquinol + NAD(+) + 4 H(+)(out). In terms of biological role, core subunit of the mitochondrial membrane respiratory chain NADH dehydrogenase (Complex I) which catalyzes electron transfer from NADH through the respiratory chain, using ubiquinone as an electron acceptor. Part of the enzyme membrane arm which is embedded in the lipid bilayer and involved in proton translocation. The polypeptide is NADH-ubiquinone oxidoreductase chain 4L (MT-ND4L) (Notoryctes typhlops (Southern marsupial mole)).